The sequence spans 288 residues: Homoserine kinase (288 aa).

ATP is bound at residue 79–89; the sequence is PPARGLGSSSA.

This sequence belongs to the GHMP kinase family. Homoserine kinase subfamily.

The protein resides in the cytoplasm. It catalyses the reaction L-homoserine + ATP = O-phospho-L-homoserine + ADP + H(+). Its pathway is amino-acid biosynthesis; L-threonine biosynthesis; L-threonine from L-aspartate: step 4/5. Functionally, catalyzes the ATP-dependent phosphorylation of L-homoserine to L-homoserine phosphate. The sequence is that of Homoserine kinase from Listeria monocytogenes serotype 4b (strain CLIP80459).